The primary structure comprises 130 residues: MARVAGIDLPNNKRLDIALRYIYGIGPAISDEIIKELSLNPAKRVKDLTEEEVGRINNLITKNLKVEGDLRREVQSNIKRLIEIRSYRGLRHRRNLPVRGQRTKTNARTRRGKRKTVGAGKSTSSIKRVK.

The span at 97–116 (PVRGQRTKTNARTRRGKRKT) shows a compositional bias: basic residues. The interval 97-130 (PVRGQRTKTNARTRRGKRKTVGAGKSTSSIKRVK) is disordered. Positions 121–130 (KSTSSIKRVK) are enriched in polar residues.

This sequence belongs to the universal ribosomal protein uS13 family. Part of the 30S ribosomal subunit. Forms a loose heterodimer with protein S19. Forms two bridges to the 50S subunit in the 70S ribosome.

Its function is as follows. Located at the top of the head of the 30S subunit, it contacts several helices of the 16S rRNA. In the 70S ribosome it contacts the 23S rRNA (bridge B1a) and protein L5 of the 50S subunit (bridge B1b), connecting the 2 subunits; these bridges are implicated in subunit movement. Contacts the tRNAs in the A and P-sites. This is Small ribosomal subunit protein uS13 from Endomicrobium trichonymphae.